Here is a 385-residue protein sequence, read N- to C-terminus: MAIKHLFTSESVSEGHPDKIADQISDAVLDAIFEQDPKARVACETYVKTGMVMVGGEITTSAWVDIEEITRQTVREIGYVHSDMGFDANSCAVLNTIGKQSPDINQGVDKADPKEQGAGDQGIMFGYATNETEVLMPAPITYAHRLMQRQAAVRKNGTLPWLRPDAKSQVTFQYDQGKIVGIDAVVLSTQHSDSISTADLREAVMEEIIKPVLPAEWLSKETKYFINPTGRFVIGGPMGDCGLTGRKIIVDTYGGAARHGGGAFSGKDPSKVDRSAAYAARYVAKNIVAAGMADRCEIQLSYAIGVADPTSIMVETFGTEKVSQEIIIEAVRQFFDLRPYGLQEMLNLLQPIYKKTAAYGHFGREEFPWEATDKAALLRDFAGLK.

H16 lines the ATP pocket. D18 is a binding site for Mg(2+). K(+) is bound at residue E44. L-methionine contacts are provided by E57 and Q100. The flexible loop stretch occupies residues 100-110 (QSPDINQGVDK). ATP-binding positions include 165–167 (DAK), 231–232 (RF), D240, 246–247 (RK), A263, and K267. D240 is an L-methionine binding site. Position 271 (K271) interacts with L-methionine.

Belongs to the AdoMet synthase family. In terms of assembly, homotetramer; dimer of dimers. The cofactor is Mg(2+). K(+) is required as a cofactor.

Its subcellular location is the cytoplasm. The enzyme catalyses L-methionine + ATP + H2O = S-adenosyl-L-methionine + phosphate + diphosphate. Its pathway is amino-acid biosynthesis; S-adenosyl-L-methionine biosynthesis; S-adenosyl-L-methionine from L-methionine: step 1/1. Functionally, catalyzes the formation of S-adenosylmethionine (AdoMet) from methionine and ATP. The overall synthetic reaction is composed of two sequential steps, AdoMet formation and the subsequent tripolyphosphate hydrolysis which occurs prior to release of AdoMet from the enzyme. In Vibrio cholerae serotype O1 (strain ATCC 39315 / El Tor Inaba N16961), this protein is S-adenosylmethionine synthase.